A 407-amino-acid chain; its full sequence is Gonadotropin-releasing hormone receptor (407 aa).

The Extracellular portion of the chain corresponds to 1-36; sequence MDYLNDSMFNNMTYNITSTPLPDAPRFDNVYVSKLC. N-linked (GlcNAc...) asparagine glycans are attached at residues N5, N11, and N15. A helical transmembrane segment spans residues 37-57; the sequence is VLGTVFVISFFGNTLVIIQIF. The Cytoplasmic segment spans residues 58 to 69; sequence RIRGSRSTIQSL. A helical membrane pass occupies residues 70-90; that stretch reads ILNLAIADLMVSFFNILMDII. The Extracellular portion of the chain corresponds to 91 to 105; that stretch reads WSATVEWLAGNTMCK. An intrachain disulfide couples C104 to C183. The helical transmembrane segment at 106-126 threads the bilayer; sequence IMKYLTVFGLHLSTYITVSIA. The Cytoplasmic segment spans residues 127–147; that stretch reads LDRCFAILSPMSRSKAPLRVR. A helical transmembrane segment spans residues 148–168; sequence IMITMAWVLSAIFSIPQAVIF. The Extracellular segment spans residues 169–199; that stretch reads QEQRKMFRQGMFHQCRDSYNALWQKQLYSAS. A helical membrane pass occupies residues 200-220; sequence SLILLFVIPLIIMVTSYLLIL. The Cytoplasmic portion of the chain corresponds to 221–268; the sequence is KTIVKTSRQFHDTPISPTSMSCYSVNHGQIRTHLFERARKRSSRMSAV. The chain crosses the membrane as a helical span at residues 269 to 289; sequence IVAAFILCWTPYYIIFLGFAF. Over 290–298 the chain is Extracellular; that stretch reads FQWDNSRTV. The helical transmembrane segment at 299 to 319 threads the bilayer; the sequence is IYFFTLGTSNCMLNPLIYGAF. Residues 320-407 lie on the Cytoplasmic side of the membrane; the sequence is TIYKVHRGRS…NGKMPTKPPG (88 aa). The segment at 377 to 407 is disordered; the sequence is SLTNPHQPVRPSPGINSTTSPNGKMPTKPPG.

Belongs to the G-protein coupled receptor 1 family. As to expression, widely expressed in peripheral nervous tissue, gonadal tissue and brain. In the brain, expression is high in the palliovisceral lobe and superior buccal lobe but low in the subvertical lobe, superior and inferior frontal lobe, posterior brachial lobe and pedal lobe. Expressed in stomach, rectum, aorta, heart, salivary gland, branchia, pancreas, radula retractor muscle, branchial vessel but not in white body, esophagus, liver and kidney.

The protein localises to the cell membrane. Functionally, receptor for gonadotropin releasing hormone (GnRH) that mediates the action of GnRH to stimulate the secretion of the gonadotropic hormones luteinizing hormone (LH) and follicle-stimulating hormone (FSH). This receptor mediates its action by association with G-proteins that activate a phosphatidylinositol-calcium second messenger system. Ligand interaction triggers steroidogenesis in spermatozoa and follicles. Appears to be involved in contraction of the radula retractor muscle. This chain is Gonadotropin-releasing hormone receptor, found in Octopus vulgaris (Common octopus).